We begin with the raw amino-acid sequence, 278 residues long: tRNA pseudouridine synthase A (278 aa).

Asp52 functions as the Nucleophile in the catalytic mechanism. A substrate-binding site is contributed by Tyr110. The tract at residues 259-278 is disordered; sequence SKRQNGTTKVEQPSSYVHEE. The span at 261-278 shows a compositional bias: polar residues; sequence RQNGTTKVEQPSSYVHEE.

The protein belongs to the tRNA pseudouridine synthase TruA family. Homodimer.

It catalyses the reaction uridine(38/39/40) in tRNA = pseudouridine(38/39/40) in tRNA. Formation of pseudouridine at positions 38, 39 and 40 in the anticodon stem and loop of transfer RNAs. This is tRNA pseudouridine synthase A from Chloroflexus aurantiacus (strain ATCC 29366 / DSM 635 / J-10-fl).